Here is a 275-residue protein sequence, read N- to C-terminus: MNYSNPTQLQAAILDWAGTVVDFGSFAPTQIFVEAFAEFDVQVSIEEARGPMGMGKWDHIRTLCDVPEIAERYRKVFGRTPTDDDVTAIYERFMPLQIEKIAVHSALIPGALDTLTGLRKEGLKIGSCSGYPKVVMDKVVELAAQNGYVADHVVATDETPNGRPWPAQALANVIALGIDDVAACVKVDDTVPGILEGRRAGMWTVALVCSGNALGLTWEGYRALSAEKLESERKRIHGMFAASRPHYLIDTINELPEVIADINRRLAKGEMPQAV.

Asp15 functions as the Nucleophile in the catalytic mechanism. Asp15 and Ala17 together coordinate Mg(2+). Lys56 serves as the catalytic Schiff-base intermediate with substrate. Asp189 lines the Mg(2+) pocket.

The protein belongs to the HAD-like hydrolase superfamily. PhnX family. In terms of assembly, homodimer. Requires Mg(2+) as cofactor.

The catalysed reaction is phosphonoacetaldehyde + H2O = acetaldehyde + phosphate + H(+). In terms of biological role, involved in phosphonate degradation. The chain is Phosphonoacetaldehyde hydrolase from Pseudomonas entomophila (strain L48).